The chain runs to 391 residues: Putative ABC transporter glucose-binding protein TsgA13 (391 aa).

The first 28 residues, 1 to 28 (MLDEESSIQRRDVLSALGAAGVTTLAGC), serve as a signal peptide directing secretion. The tract at residues 24-71 (TLAGCTGGDTGDTDDTEASETTASEGTTSGTTTGDVETTDGGGPSEGE) is disordered. Residues 42 to 59 (SETTASEGTTSGTTTGDV) are compositionally biased toward low complexity.

The protein belongs to the BMP lipoprotein family. In terms of assembly, the complex is composed of two ATP-binding proteins (TsgD13), two transmembrane proteins (TsgB13 and TsgC13) and a solute-binding protein (TsgA13).

In terms of biological role, part of an ABC transporter complex involved in glucose import. The protein is Putative ABC transporter glucose-binding protein TsgA13 (tsgA13) of Haloferax volcanii (strain ATCC 29605 / DSM 3757 / JCM 8879 / NBRC 14742 / NCIMB 2012 / VKM B-1768 / DS2) (Halobacterium volcanii).